A 970-amino-acid polypeptide reads, in one-letter code: Villin-3 (970 aa).

Gelsolin-like repeat units follow at residues 31–111 (AVPV…ERFL), 151–219 (TVHV…EDGK), 273–339 (VLTR…TVIF), 416–484 (KFYS…PAEF), 536–576 (AIQV…QELA), and 643–714 (NFTQ…PQFF). A disordered region spans residues 741–908 (DGVKPKLDKP…EGQPENEEGL (168 aa)). Positions 755 to 778 (TTSSSHTGRSSVPEKSQRSRSMSF) are enriched in polar residues. Residues 833–842 (AASIAAISAS) show a composition bias toward low complexity. Residues 878–893 (KDSTPSKDSPTVTPTI) show a composition bias toward polar residues. The region spanning 905 to 970 (EEGLPVYPYE…NRLKIALQLF (66 aa)) is the HP domain.

It belongs to the villin/gelsolin family. As to expression, expressed in roots, young leaves, and inflorescences, mostly in the vasculature of roots, leaves, and filaments of the anthers and in epidermal cells of the elongation zone and root hairs. Also detected in guard cells.

Its subcellular location is the cytoplasm. The protein localises to the cytoskeleton. Its function is as follows. Ca(2+)-regulated actin-binding protein. Binds actin microfilaments (MFs). Involved in actin filament bundling, severing and capping. Caps the barbed end of actin filaments and is able to sever them in a calcium-dependent manner. MF severing is promoted by VLN1. The sequence is that of Villin-3 from Oryza sativa subsp. japonica (Rice).